Consider the following 1020-residue polypeptide: Phosphatidylinositol 3-kinase VPS34 (1020 aa).

In terms of domain architecture, C2 PI3K-type spans 49–210 (LSTKFEDPTV…NWLDKMVLPK (162 aa)). In terms of domain architecture, PIK helical spans 331-577 (DKELKPTPQL…DGPIKIYMDI (247 aa)). Positions 666-1004 (YPEESSVFKS…LINDSVNAFL (339 aa)) constitute a PI3K/PI4K catalytic domain. The tract at residues 672–678 (VFKSSLA) is G-loop. Residues 873–881 (GVGDRHLDN) are catalytic loop. The tract at residues 892-913 (HADFGYILGRDPKPFPPLMKLP) is activation loop.

It belongs to the PI3/PI4-kinase family. As to quaternary structure, component of the autophagy-specific VPS34 PI3-kinase complex I composed of at least VPS15, VPS30, VPS34, and of the VPS34 PI3-kinase complex II composed of VPS15, VPS30, VPS34 and VPS38. Interacts with VMNA7. Post-translationally, autophosphorylated.

Its subcellular location is the golgi apparatus. It is found in the trans-Golgi network membrane. It localises to the endosome membrane. It carries out the reaction a 1,2-diacyl-sn-glycero-3-phospho-(1D-myo-inositol) + ATP = a 1,2-diacyl-sn-glycero-3-phospho-(1D-myo-inositol-3-phosphate) + ADP + H(+). Functionally, multifunctional phosphatidylinositol 3-kinase involved in acidification of vacuoles, pH-dependent cell growth, and autophagocytosis. Plays an important role in protein transport and virulence. Component of the autophagy-specific VPS34 PI3-kinase complex I essential to recruit the ATG8-phosphatidylinositol conjugate and the ATG12-ATG5 conjugate to the pre-autophagosomal structure. Also involved in endosome-to-Golgi retrograde transport as part of the VPS34 PI3-kinase complex II. This second complex is required for the endosome-to-Golgi retrieval of PEP1 and KEX2, and the recruitment of VPS5 and VPS7, two components of the retromer complex, to endosomal membranes (probably through the synthesis of a specific pool of phosphatidylinositol 3-phosphate recruiting the retromer to the endosomes). Finally, it might also be involved in ethanol tolerance and cell wall integrity. The chain is Phosphatidylinositol 3-kinase VPS34 from Candida albicans (Yeast).